We begin with the raw amino-acid sequence, 230 residues long: Zein-alpha 19A2 (230 aa).

The signal sequence occupies residues 1-18 (KIFCFLMLLGLSASAATA).

It belongs to the zein family.

Its function is as follows. Zeins are major seed storage proteins. This chain is Zein-alpha 19A2, found in Zea mays (Maize).